The primary structure comprises 500 residues: Cytochrome P450 11B2, mitochondrial (500 aa).

The N-terminal 24 residues, 1–24 (MALRAKADVWLARPWQCLPRTRAL), are a transit peptide targeting the mitochondrion. Position 381 (phenylalanine 381) interacts with 21-hydroxyprogesterone. Cysteine 447 is a heme binding site.

It belongs to the cytochrome P450 family. Heme is required as a cofactor. In terms of tissue distribution, adrenal gland.

It localises to the mitochondrion inner membrane. It catalyses the reaction a steroid + 2 reduced [adrenodoxin] + O2 + 2 H(+) = an 11beta-hydroxysteroid + 2 oxidized [adrenodoxin] + H2O. It carries out the reaction 21-hydroxyprogesterone + 2 reduced [adrenodoxin] + O2 + 2 H(+) = corticosterone + 2 oxidized [adrenodoxin] + H2O. The catalysed reaction is corticosterone + 2 reduced [adrenodoxin] + O2 + 2 H(+) = 18-hydroxycorticosterone + 2 oxidized [adrenodoxin] + H2O. The enzyme catalyses 18-hydroxycorticosterone + 2 reduced [adrenodoxin] + O2 + 2 H(+) = aldosterone + 2 oxidized [adrenodoxin] + 2 H2O. It catalyses the reaction 11-deoxycortisol + 2 reduced [adrenodoxin] + O2 + 2 H(+) = cortisol + 2 oxidized [adrenodoxin] + H2O. It carries out the reaction 21-hydroxyprogesterone + 2 reduced [adrenodoxin] + O2 + 2 H(+) = 18-hydroxy-11-deoxycorticosterone + 2 oxidized [adrenodoxin] + H2O. The catalysed reaction is cortisol + 2 reduced [adrenodoxin] + O2 + 2 H(+) = 18-hydroxycortisol + 2 oxidized [adrenodoxin] + H2O. The enzyme catalyses 18-hydroxycortisol + 2 reduced [adrenodoxin] + O2 + 2 H(+) = 18-oxocortisol + 2 oxidized [adrenodoxin] + 2 H2O. It participates in steroid biosynthesis. In terms of biological role, a cytochrome P450 monooxygenase that catalyzes the biosynthesis of aldosterone, the main mineralocorticoid in the human body responsible for salt and water homeostasis, thus involved in blood pressure regulation, arterial hypertension, and the development of heart failure. Catalyzes three sequential oxidative reactions of 11-deoxycorticosterone (21-hydroxyprogesterone), namely 11-beta hydroxylation, followed by two successive oxidations at C18 yielding 18-hydroxy and then 18-oxo intermediates (that would not leave the enzyme active site during the consecutive hydroxylation reactions), ending with the formation of aldosterone. Can also produce 18-hydroxycortisol and 18-oxocortisol, derived from successive oxidations of cortisol at C18, normally found at very low levels, but significantly increased in primary aldosteronism, the most common form of secondary hypertension. Mechanistically, uses molecular oxygen inserting one oxygen atom into a substrate and reducing the second into a water molecule. Two electrons are provided by NADPH via a two-protein mitochondrial transfer system comprising flavoprotein FDXR (adrenodoxin/ferredoxin reductase) and nonheme iron-sulfur protein FDX1 or FDX2 (adrenodoxin/ferredoxin). Could also be involved in the androgen metabolic pathway. The sequence is that of Cytochrome P450 11B2, mitochondrial (CYP11B2) from Mesocricetus auratus (Golden hamster).